The chain runs to 519 residues: Cytochrome P450 52E1 (519 aa).

Transmembrane regions (helical) follow at residues 10 to 30 and 44 to 64; these read ALGG…FYFI and VIVF…TAML. C479 is a binding site for heme.

Belongs to the cytochrome P450 family. The cofactor is heme.

Its subcellular location is the membrane. Together with an NADPH cytochrome P450 the enzyme system catalyzes the terminal hydroxylation as the first step in the assimilation of alkanes and fatty acids. The sequence is that of Cytochrome P450 52E1 (CYP52E1) from Candida apicola (Yeast).